Consider the following 302-residue polypeptide: Bifunctional protein FolD (302 aa).

Residues 165–167 (GRS), serine 190, and isoleucine 231 contribute to the NADP(+) site.

The protein belongs to the tetrahydrofolate dehydrogenase/cyclohydrolase family. As to quaternary structure, homodimer.

The catalysed reaction is (6R)-5,10-methylene-5,6,7,8-tetrahydrofolate + NADP(+) = (6R)-5,10-methenyltetrahydrofolate + NADPH. It carries out the reaction (6R)-5,10-methenyltetrahydrofolate + H2O = (6R)-10-formyltetrahydrofolate + H(+). It functions in the pathway one-carbon metabolism; tetrahydrofolate interconversion. Catalyzes the oxidation of 5,10-methylenetetrahydrofolate to 5,10-methenyltetrahydrofolate and then the hydrolysis of 5,10-methenyltetrahydrofolate to 10-formyltetrahydrofolate. The sequence is that of Bifunctional protein FolD from Prochlorococcus marinus (strain MIT 9303).